A 310-amino-acid polypeptide reads, in one-letter code: Alpha/beta hydrolase domain-containing protein 17A (310 aa).

Residues serine 190, aspartate 255, and histidine 284 each act as charge relay system in the active site. At serine 307 the chain carries Phosphoserine.

The protein belongs to the AB hydrolase superfamily. ABHD17 family. Palmitoylated on cysteine residues located in a cysteine cluster at the N-terminus which promotes membrane localization. Palmitoylation is required for post-synaptic localization and for depalmitoylating activity towards DLG4/PSD95.

The protein localises to the cell membrane. It localises to the endosome membrane. It is found in the cell projection. The protein resides in the dendritic spine. Its subcellular location is the postsynaptic density membrane. It carries out the reaction S-hexadecanoyl-L-cysteinyl-[protein] + H2O = L-cysteinyl-[protein] + hexadecanoate + H(+). Its activity is regulated as follows. Inhibited by palmostatin-B. In terms of biological role, hydrolyzes fatty acids from S-acylated cysteine residues in proteins. Has depalmitoylating activity towards NRAS. Has depalmitoylating activity towards DLG4/PSD95. May have depalmitoylating activity towards MAP6. In Homo sapiens (Human), this protein is Alpha/beta hydrolase domain-containing protein 17A.